Reading from the N-terminus, the 219-residue chain is Small ribosomal subunit protein uS3c (219 aa).

Residues 43-120 enclose the KH type-2 domain; sequence IQNYIQKNMQ…KINITITKIT (78 aa).

Belongs to the universal ribosomal protein uS3 family. Part of the 30S ribosomal subunit.

Its subcellular location is the plastid. The protein resides in the chloroplast. This is Small ribosomal subunit protein uS3c (rps3) from Oenothera elata subsp. hookeri (Hooker's evening primrose).